The sequence spans 370 residues: 3-isopropylmalate dehydrogenase (370 aa).

NAD(+) is bound at residue 77 to 90 (GPKWDSVPYEVRPE). Arg-97, Arg-107, Arg-135, and Asp-226 together coordinate substrate. Mg(2+)-binding residues include Asp-226, Asp-250, and Asp-254. Residue 290–302 (GSAPDIAGKGIAN) coordinates NAD(+).

It belongs to the isocitrate and isopropylmalate dehydrogenases family. LeuB type 1 subfamily. In terms of assembly, homodimer. The cofactor is Mg(2+). Mn(2+) serves as cofactor.

Its subcellular location is the cytoplasm. The catalysed reaction is (2R,3S)-3-isopropylmalate + NAD(+) = 4-methyl-2-oxopentanoate + CO2 + NADH. It participates in amino-acid biosynthesis; L-leucine biosynthesis; L-leucine from 3-methyl-2-oxobutanoate: step 3/4. Its function is as follows. Catalyzes the oxidation of 3-carboxy-2-hydroxy-4-methylpentanoate (3-isopropylmalate) to 3-carboxy-4-methyl-2-oxopentanoate. The product decarboxylates to 4-methyl-2 oxopentanoate. The protein is 3-isopropylmalate dehydrogenase of Brucella abortus (strain 2308).